The primary structure comprises 411 residues: Lysosome-associated membrane glycoprotein 3 (411 aa).

Residues 1–21 (MPGQISAVAVLFLSLTVILHG) form the signal peptide. The Lumenal portion of the chain corresponds to 22 to 376 (YQIREKEFPK…NVNECLSDYT (355 aa)). Polar residues predominate over residues 172–192 (HKSTTNQRPTLSTNVLGTSTP). The segment at 172–204 (HKSTTNQRPTLSTNVLGTSTPTHKDRSTTSPVP) is disordered. N227 is a glycosylation site (N-linked (GlcNAc...) asparagine). Intrachain disulfides connect C232–C269 and C334–C371. Residues 377 to 397 (VVLPMVAIIVVVICVVGLSVY) traverse the membrane as a helical segment. Residues 398-411 (KIRQRHQSSAYQRI) are Cytoplasmic-facing.

It belongs to the LAMP family. In terms of assembly, monomer. Interacts with FURIN.

It localises to the cell surface. Its subcellular location is the lysosome membrane. The protein localises to the cytoplasmic vesicle membrane. It is found in the early endosome membrane. In terms of biological role, lysosomal membrane glycoprotein which plays a role in the unfolded protein response (UPR) that contributes to protein degradation and cell survival during proteasomal dysfunction. Plays a role in the process of fusion of the lysosome with the autophagosome, thereby modulating the autophagic process. Promotes hepatocellular lipogenesis through activation of the PI3K/Akt pathway. May also play a role in dendritic cell function and in adaptive immunity. The protein is Lysosome-associated membrane glycoprotein 3 (Lamp3) of Mus musculus (Mouse).